The sequence spans 165 residues: Nucleotide-binding protein Syncc9605_0652 (165 aa).

This sequence belongs to the YajQ family.

Its function is as follows. Nucleotide-binding protein. The protein is Nucleotide-binding protein Syncc9605_0652 of Synechococcus sp. (strain CC9605).